The sequence spans 231 residues: MSGEENPASKPTPVQDVQGDGRWMSLHHRFVADSKDKEPEVVFIGDSLVQLMHQCEIWRELFSPLHALNFGIGGDGTQHVLWRLENGELEHIRPKIVVVWVGTNNHGHTAEQVTGGIKAIVQLVNERQPQARVVVLDLLPRGQHPNPLREKNQRVNELVRAALAGHPRAHFLDADPGFVHSDGTISHHDMYDYLHLSRLGYAPVCRALHSLLLRLLAQDQGQGAPLLDPAP.

Residue Ser-2 is modified to N-acetylserine. Ser-2 carries the post-translational modification Phosphoserine. Residues Ser-47, Asp-192, and His-195 contribute to the active site.

Belongs to the 'GDSL' lipolytic enzyme family. Platelet-activating factor acetylhydrolase IB beta/gamma subunits subfamily. Forms a catalytic dimer which is either homodimer (alpha1/alpha1 homodimer) or heterodimer with PAFAH1B2 (alpha1/alpha2 heterodimer). Component of the cytosolic (PAF-AH (I)) heterotetrameric enzyme, which is composed of PAFAH1B1 (beta), PAFAH1B2 (alpha2) and PAFAH1B3 (alpha1) subunits. The catalytic activity of the enzyme resides in the alpha1 (PAFAH1B3) and alpha2 (PAFAH1B2) subunits, whereas the beta subunit (PAFAH1B1) has regulatory activity. Trimer formation is not essential for the catalytic activity. Interacts with VLDLR; this interaction may modulate the Reelin pathway.

It is found in the cytoplasm. It carries out the reaction a 1-O-alkyl-2-acetyl-sn-glycero-3-phosphocholine + H2O = a 1-O-alkyl-sn-glycero-3-phosphocholine + acetate + H(+). The enzyme catalyses 1-O-hexadecyl-2-acetyl-sn-glycero-3-phosphocholine + H2O = 1-O-hexadecyl-sn-glycero-3-phosphocholine + acetate + H(+). It catalyses the reaction 1-O-hexadecyl-2-acetyl-sn-glycero-3-phosphate + H2O = 1-O-hexadecyl-sn-glycero-3-phosphate + acetate + H(+). Beta subunit (PAFAH1B1) inhibits the acetylhydrolase activity of the alpha1/alpha1 catalytic homodimer. In terms of biological role, alpha1 catalytic subunit of the cytosolic type I platelet-activating factor (PAF) acetylhydrolase (PAF-AH (I)) heterotetrameric enzyme that catalyzes the hydrolyze of the acetyl group at the sn-2 position of PAF and its analogs and modulates the action of PAF. The activity and substrate specificity of PAF-AH (I) are affected by its subunit composition. Both alpha1/alpha1 homodimer (PAFAH1B3/PAFAH1B3 homodimer) and alpha1/alpha2 heterodimer(PAFAH1B3/PAFAH1B2 heterodimer) hydrolyze 1-O-alkyl-2-acetyl-sn-glycero-3-phosphoric acid (AAGPA) more efficiently than PAF, but they have little hydrolytic activity towards 1-O-alkyl-2-acetyl-sn-glycero-3-phosphorylethanolamine (AAGPE). Plays an important role during the development of brain. The chain is Platelet-activating factor acetylhydrolase IB subunit alpha1 from Pongo abelii (Sumatran orangutan).